Here is a 79-residue protein sequence, read N- to C-terminus: Probable 26S proteasome complex subunit sem1 (79 aa).

Basic and acidic residues predominate over residues 1–21 (MSAPDKEKEKEKEETNNKSED). Positions 1–30 (MSAPDKEKEKEKEETNNKSEDLGLLEEDDE) are disordered. At Ser19 the chain carries Phosphoserine.

Belongs to the DSS1/SEM1 family. As to quaternary structure, part of the 26S proteasome.

Its function is as follows. Subunit of the 26S proteasome which plays a role in ubiquitin-dependent proteolysis. This chain is Probable 26S proteasome complex subunit sem1, found in Drosophila melanogaster (Fruit fly).